Consider the following 445-residue polypeptide: UPF0210 protein SSU05_0296 (445 aa).

This sequence belongs to the UPF0210 family. In terms of assembly, homodimer.

This Streptococcus suis (strain 05ZYH33) protein is UPF0210 protein SSU05_0296.